The primary structure comprises 344 residues: Glyceraldehyde-3-phosphate dehydrogenase (344 aa).

NAD(+)-binding positions include 11–12 (TI) and G110. Position 139-141 (139-141 (SCN)) interacts with D-glyceraldehyde 3-phosphate. The active-site Nucleophile is C140. R169 serves as a coordination point for NAD(+). Residue 195–196 (HG) coordinates D-glyceraldehyde 3-phosphate. Q302 lines the NAD(+) pocket.

This sequence belongs to the glyceraldehyde-3-phosphate dehydrogenase family. In terms of assembly, homotetramer.

The protein resides in the cytoplasm. It carries out the reaction D-glyceraldehyde 3-phosphate + phosphate + NADP(+) = (2R)-3-phospho-glyceroyl phosphate + NADPH + H(+). It catalyses the reaction D-glyceraldehyde 3-phosphate + phosphate + NAD(+) = (2R)-3-phospho-glyceroyl phosphate + NADH + H(+). It functions in the pathway carbohydrate degradation; glycolysis; pyruvate from D-glyceraldehyde 3-phosphate: step 1/5. This Pyrobaculum arsenaticum (strain DSM 13514 / JCM 11321 / PZ6) protein is Glyceraldehyde-3-phosphate dehydrogenase.